Consider the following 331-residue polypeptide: MSDALIASSSEAPQSPAEQYDPTRKQKSADKTARIPIKIVPAEKLKKPDWIRVKAATGNSRFYEIKDILRANNLVTVCEEASCPNIGECFGKGTATFMIMGDKCTRRCPFCDVGHGRPDPLDVNEPGNLARTIAQLKLNYVVITSVDRDDLRDGGAQHYVDCISQTRELSPATRIEVLVPDFRGRLDKALDILQACPPDVMNHNMETVPRLYKQARPGADYAHSLKLLQEFKRRNPNVPTKSGLMVGLGETDEEILEVMRDMRAHDIDMLTIGQYLAPSNHHLPVLRYVHPDTFKMFEEEAYKMGFTHAAVGAMVRSSYHADQQAHQAGFA.

A disordered region spans residues 1–33 (MSDALIASSSEAPQSPAEQYDPTRKQKSADKTA). Residues 7–19 (ASSSEAPQSPAEQ) are compositionally biased toward low complexity. The segment covering 21–33 (DPTRKQKSADKTA) has biased composition (basic and acidic residues). [4Fe-4S] cluster-binding residues include C78, C83, C89, C104, C108, C111, and S318. The Radical SAM core domain occupies 89–307 (CFGKGTATFM…EEEAYKMGFT (219 aa)).

Belongs to the radical SAM superfamily. Lipoyl synthase family. The cofactor is [4Fe-4S] cluster.

The protein resides in the cytoplasm. It catalyses the reaction [[Fe-S] cluster scaffold protein carrying a second [4Fe-4S](2+) cluster] + N(6)-octanoyl-L-lysyl-[protein] + 2 oxidized [2Fe-2S]-[ferredoxin] + 2 S-adenosyl-L-methionine + 4 H(+) = [[Fe-S] cluster scaffold protein] + N(6)-[(R)-dihydrolipoyl]-L-lysyl-[protein] + 4 Fe(3+) + 2 hydrogen sulfide + 2 5'-deoxyadenosine + 2 L-methionine + 2 reduced [2Fe-2S]-[ferredoxin]. It functions in the pathway protein modification; protein lipoylation via endogenous pathway; protein N(6)-(lipoyl)lysine from octanoyl-[acyl-carrier-protein]: step 2/2. Catalyzes the radical-mediated insertion of two sulfur atoms into the C-6 and C-8 positions of the octanoyl moiety bound to the lipoyl domains of lipoate-dependent enzymes, thereby converting the octanoylated domains into lipoylated derivatives. This is Lipoyl synthase from Cupriavidus pinatubonensis (strain JMP 134 / LMG 1197) (Cupriavidus necator (strain JMP 134)).